The following is a 651-amino-acid chain: Threonine--tRNA ligase (651 aa).

The 64-residue stretch at 1-64 (MSSVVHVTLP…EKDCTLQVLT (64 aa)) folds into the TGS domain. The interval 245–535 (DHRRLGPELG…LTEHYAGNFP (291 aa)) is catalytic. Zn(2+) contacts are provided by Cys-336, His-387, and His-512.

Belongs to the class-II aminoacyl-tRNA synthetase family. As to quaternary structure, homodimer. It depends on Zn(2+) as a cofactor.

The protein localises to the cytoplasm. The catalysed reaction is tRNA(Thr) + L-threonine + ATP = L-threonyl-tRNA(Thr) + AMP + diphosphate + H(+). Catalyzes the attachment of threonine to tRNA(Thr) in a two-step reaction: L-threonine is first activated by ATP to form Thr-AMP and then transferred to the acceptor end of tRNA(Thr). Also edits incorrectly charged L-seryl-tRNA(Thr). The polypeptide is Threonine--tRNA ligase (Symbiobacterium thermophilum (strain DSM 24528 / JCM 14929 / IAM 14863 / T)).